A 222-amino-acid polypeptide reads, in one-letter code: Pyridoxine/pyridoxamine 5'-phosphate oxidase (222 aa).

FMN is bound by residues 69–74 (RMVLLK), 84–85 (YT), K91, and Q113. Substrate is bound at residue K74. The substrate site is built by Y131, R135, and S139. Residues 148–149 (QS) and W193 contribute to the FMN site. 199–201 (RLH) lines the substrate pocket. R203 contacts FMN.

Belongs to the pyridoxamine 5'-phosphate oxidase family. As to quaternary structure, homodimer. The cofactor is FMN.

It catalyses the reaction pyridoxamine 5'-phosphate + O2 + H2O = pyridoxal 5'-phosphate + H2O2 + NH4(+). The enzyme catalyses pyridoxine 5'-phosphate + O2 = pyridoxal 5'-phosphate + H2O2. The protein operates within cofactor metabolism; pyridoxal 5'-phosphate salvage; pyridoxal 5'-phosphate from pyridoxamine 5'-phosphate: step 1/1. It functions in the pathway cofactor metabolism; pyridoxal 5'-phosphate salvage; pyridoxal 5'-phosphate from pyridoxine 5'-phosphate: step 1/1. Catalyzes the oxidation of either pyridoxine 5'-phosphate (PNP) or pyridoxamine 5'-phosphate (PMP) into pyridoxal 5'-phosphate (PLP). In Maricaulis maris (strain MCS10) (Caulobacter maris), this protein is Pyridoxine/pyridoxamine 5'-phosphate oxidase.